Consider the following 199-residue polypeptide: Ribonuclease HII (199 aa).

The region spanning 10–199 is the RNase H type-2 domain; that stretch reads HLVAGVDEVG…VKRALGLASN (190 aa). A divalent metal cation-binding residues include aspartate 16, glutamate 17, and aspartate 108.

The protein belongs to the RNase HII family. The cofactor is Mn(2+). It depends on Mg(2+) as a cofactor.

It localises to the cytoplasm. It carries out the reaction Endonucleolytic cleavage to 5'-phosphomonoester.. Its function is as follows. Endonuclease that specifically degrades the RNA of RNA-DNA hybrids. The sequence is that of Ribonuclease HII from Klebsiella pneumoniae subsp. pneumoniae (strain ATCC 700721 / MGH 78578).